The following is a 221-amino-acid chain: Inositol phosphorylceramide synthase regulatory subunit KEI1 (221 aa).

Helical transmembrane passes span 11 to 31 (SFLG…ISIL), 54 to 74 (WIAY…LYLI), 79 to 99 (LLVF…TCFF), and 154 to 174 (ILIT…LASF). The interval 176 to 221 (QELLHHPKYLVDRDDVEQNLKNKPIWKRLWAKSQKGCYKLCKNLLE) is COPI vesicle-binding.

Belongs to the KEI1 family. As to quaternary structure, component of the inositol phosphorylceramide synthase complex composed of at least AUR1 and KEI1. Interacts (via C-terminal region) with COP1 and SEC21. Note=The interaction with AUR1 seems to occur with the full-length protein before cleavage by KEX2 since both full-length and short chains of KEI1 interact with AUR1. In terms of processing, the precursor protein is cleaved into two polypeptide chains, KEI1N and KEI1C. The cleavage is performed in the Golgi apparatus by the KEX2 protease which recognizes residue Arg-135. Generation of KEX2 cleavage site may have been an accidental event in evolution without specific advantages or disadvantages in IPC synthesis.

It localises to the golgi apparatus membrane. Regulatory component of the inositol phosphorylceramide (ICP) synthase which catalyzes the addition of a phosphorylinositol group onto ceramide to form inositol phosphorylceramide, an essential step in sphingolipid biosynthesis. Helps the medial Golgi localization of IPC synthase in a COPI vesicle-dependent manner. This Saccharomyces cerevisiae (strain ATCC 204508 / S288c) (Baker's yeast) protein is Inositol phosphorylceramide synthase regulatory subunit KEI1 (KEI1).